A 261-amino-acid chain; its full sequence is Aromatic peroxygenase (261 aa).

Cysteine 36 contacts heme. Asparagine 100, asparagine 137, asparagine 141, and asparagine 220 each carry an N-linked (GlcNAc...) asparagine glycan.

This sequence belongs to the chloroperoxidase family. Heme b is required as a cofactor. In terms of processing, N-glycosylated.

Its function is as follows. Aromatic peroxidase that oxidizes aryl alcohols into the corresponding aldehydes and then into the corresponding benzoic acids. Catalyzes the regioselective peroxide-dependent hydroxylation of naphthalene to 1-naphthol and to a far lesser extent 2-naphthol via a naphthalene 1,2-oxide intermediate. Halogenates phenol to 2-bromophenol and 4-bromophenol. Oxidizes the sulfur-containing heterocycle dibenzothiophene to yield sulfoxidation products, and trace amounts of ring-hydroxylation products. The chain is Aromatic peroxygenase from Coprinellus radians (Coprophilous mushroom).